The primary structure comprises 320 residues: Lipoyl synthase (320 aa).

Positions 56, 61, 67, 82, 86, 89, and 295 each coordinate [4Fe-4S] cluster. Residues 68-284 (WNRRTATFMI…REEALKRGFA (217 aa)) form the Radical SAM core domain. The tract at residues 300-320 (EQSAQAVARRTGAGRAAQTGD) is disordered. Residues 303-320 (AQAVARRTGAGRAAQTGD) show a composition bias toward low complexity.

Belongs to the radical SAM superfamily. Lipoyl synthase family. Requires [4Fe-4S] cluster as cofactor.

It is found in the cytoplasm. The catalysed reaction is [[Fe-S] cluster scaffold protein carrying a second [4Fe-4S](2+) cluster] + N(6)-octanoyl-L-lysyl-[protein] + 2 oxidized [2Fe-2S]-[ferredoxin] + 2 S-adenosyl-L-methionine + 4 H(+) = [[Fe-S] cluster scaffold protein] + N(6)-[(R)-dihydrolipoyl]-L-lysyl-[protein] + 4 Fe(3+) + 2 hydrogen sulfide + 2 5'-deoxyadenosine + 2 L-methionine + 2 reduced [2Fe-2S]-[ferredoxin]. It functions in the pathway protein modification; protein lipoylation via endogenous pathway; protein N(6)-(lipoyl)lysine from octanoyl-[acyl-carrier-protein]: step 2/2. Its function is as follows. Catalyzes the radical-mediated insertion of two sulfur atoms into the C-6 and C-8 positions of the octanoyl moiety bound to the lipoyl domains of lipoate-dependent enzymes, thereby converting the octanoylated domains into lipoylated derivatives. The protein is Lipoyl synthase of Symbiobacterium thermophilum (strain DSM 24528 / JCM 14929 / IAM 14863 / T).